The sequence spans 305 residues: UDP-3-O-acyl-N-acetylglucosamine deacetylase (305 aa).

H78, H235, and D239 together coordinate Zn(2+). Residue H262 is the Proton donor of the active site.

This sequence belongs to the LpxC family. Zn(2+) is required as a cofactor.

It carries out the reaction a UDP-3-O-[(3R)-3-hydroxyacyl]-N-acetyl-alpha-D-glucosamine + H2O = a UDP-3-O-[(3R)-3-hydroxyacyl]-alpha-D-glucosamine + acetate. It functions in the pathway glycolipid biosynthesis; lipid IV(A) biosynthesis; lipid IV(A) from (3R)-3-hydroxytetradecanoyl-[acyl-carrier-protein] and UDP-N-acetyl-alpha-D-glucosamine: step 2/6. In terms of biological role, catalyzes the hydrolysis of UDP-3-O-myristoyl-N-acetylglucosamine to form UDP-3-O-myristoylglucosamine and acetate, the committed step in lipid A biosynthesis. In Geobacter sp. (strain M21), this protein is UDP-3-O-acyl-N-acetylglucosamine deacetylase.